Reading from the N-terminus, the 669-residue chain is MSIEKTLDELKKQLNYHAYRYYVEDSPELPDAEYDRMMQQLLLIEKEHPEFMTVDSPSQRVGGEALGGFTQVQHEIPMLSLDNAFNDNELDSFEKRINDRLISDSVSLFCCEPKLDGLAVSLLYVDGLLVQAGTRGDGATGENITENVRTIRCIPLTLQGEGWPTRLEVRGEVFMPKAGFDALNERALKRAEKPFANPRNAAAGSLRQLDSKITATRPLSFYAYSVGIIEGGELEGSHYQRFVQLKNWGLPMCEETKQCHSLTDVKAYYKDILERRDALKYEIDGVVIKVDSISLQEQLGFVARAPRWAIAYKFPAQEELTVLNDVEFQVGRTGAITPVAKLEPIFVGGVTVSNATLHNADEIARLGVHIGDTVIIRRAGDVIPQIVSVVEARRPEDSKAIIYPTTCPACDSQLERIEGEVVTRCVAGLVCPAQRKEALKHFVSRKALDVDGLGDKVVEQLVDKEMVETPADLFKLSAGVLTVLDRMGPKSAQNVVNALNKAKETTLSRFLYSLGIREVGEATAANLALHFQTLNAISSATFEQLIEVSDVGDIVAKHILGFFSEPHNQAVIENLQLMGVNWPDIKALDESVPQPLADKVVVLTGTLYKLKRNEAKAALQELGAKVAGSVSKNTDILFAGEAAGSKLAKAEELGVEIMNEEQLIEILNN.

NAD(+) contacts are provided by residues 31 to 35 (DAEYD), 80 to 81 (SL), and Glu112. Lys114 functions as the N6-AMP-lysine intermediate in the catalytic mechanism. Residues Arg135, Glu172, Lys289, and Lys313 each coordinate NAD(+). Zn(2+)-binding residues include Cys407, Cys410, Cys425, and Cys431. The 79-residue stretch at 591-669 (SVPQPLADKV…EEQLIEILNN (79 aa)) folds into the BRCT domain.

It belongs to the NAD-dependent DNA ligase family. LigA subfamily. Requires Mg(2+) as cofactor. It depends on Mn(2+) as a cofactor.

It catalyses the reaction NAD(+) + (deoxyribonucleotide)n-3'-hydroxyl + 5'-phospho-(deoxyribonucleotide)m = (deoxyribonucleotide)n+m + AMP + beta-nicotinamide D-nucleotide.. Its function is as follows. DNA ligase that catalyzes the formation of phosphodiester linkages between 5'-phosphoryl and 3'-hydroxyl groups in double-stranded DNA using NAD as a coenzyme and as the energy source for the reaction. It is essential for DNA replication and repair of damaged DNA. This chain is DNA ligase, found in Aliivibrio salmonicida (strain LFI1238) (Vibrio salmonicida (strain LFI1238)).